Here is a 198-residue protein sequence, read N- to C-terminus: Outer-membrane lipoprotein carrier protein (198 aa).

An N-terminal signal peptide occupies residues 1–17 (MKKFLFSLCLLSSTVLA).

This sequence belongs to the LolA family. Monomer.

The protein resides in the periplasm. Its function is as follows. Participates in the translocation of lipoproteins from the inner membrane to the outer membrane. Only forms a complex with a lipoprotein if the residue after the N-terminal Cys is not an aspartate (The Asp acts as a targeting signal to indicate that the lipoprotein should stay in the inner membrane). This chain is Outer-membrane lipoprotein carrier protein, found in Aliivibrio fischeri (strain MJ11) (Vibrio fischeri).